The primary structure comprises 740 residues: Cell death abnormality protein 12 (740 aa).

The region spanning 348-494 (SEIQKVLDID…FVLEQLRHVL (147 aa)) is the ELMO domain. Positions 555–690 (INHLNYLKKG…ESLAYLVGNT (136 aa)) are required for punctate localization, cell corpse engulfment and distal cell tip migration. The SH3-binding signature appears at 724 to 727 (PDVP).

Interacts with psr-1. Forms a ternary complex with ced-2 and ced-5.

The protein resides in the cytoplasm. Functionally, involved in apoptosis and necrosis. Required for the cell corpse engulfment process. Has roles in the formation of actin halos and distal tip cell migration. Plays no role in amphid axon outgrowth. The protein is Cell death abnormality protein 12 of Caenorhabditis briggsae.